The primary structure comprises 266 residues: Protein PYRICULARIA ORYZAE RESISTANCE 21 (266 aa).

The region spanning 1–68 (MGILVILVDL…IWCKAGKIIK (68 aa)) is the HMA domain. Cysteine 12 and cysteine 15 together coordinate a metal cation. The tract at residues 129 to 156 (CEKPKPCEKPPPCKPEEPPKPPPEKPPP) is disordered. Residues 142–156 (KPEEPPKPPPEKPPP) are compositionally biased toward basic and acidic residues.

Involved in defense responses. Contributes to slowing defense responses toward Magnaporthe oryzae. This chain is Protein PYRICULARIA ORYZAE RESISTANCE 21, found in Oryza sativa subsp. japonica (Rice).